Consider the following 221-residue polypeptide: uncharacterized protein (221 aa).

This is an uncharacterized protein from Escherichia coli (strain K12).